Reading from the N-terminus, the 660-residue chain is Probable alpha-galactosidase D (660 aa).

Residues 1–20 (MLLHFILYAALSSVVTSVSL) form the signal peptide. N-linked (GlcNAc...) asparagine glycans are attached at residues Asn47, Asn91, and Asn129. Cys124 and Cys157 form a disulfide bridge. The Nucleophile role is filled by Asp155. N-linked (GlcNAc...) asparagine glycans are attached at residues Asn182 and Asn191. 200 to 204 (EWGIS) serves as a coordination point for substrate. Asp222 serves as the catalytic Proton donor. 7 N-linked (GlcNAc...) asparagine glycosylation sites follow: Asn351, Asn403, Asn460, Asn492, Asn506, Asn514, and Asn584.

The protein belongs to the glycosyl hydrolase 27 family.

It localises to the secreted. The enzyme catalyses Hydrolysis of terminal, non-reducing alpha-D-galactose residues in alpha-D-galactosides, including galactose oligosaccharides, galactomannans and galactolipids.. Functionally, hydrolyzes a variety of simple alpha-D-galactoside as well as more complex molecules such as oligosaccharides and polysaccharides. In Aspergillus niger (strain ATCC MYA-4892 / CBS 513.88 / FGSC A1513), this protein is Probable alpha-galactosidase D (aglD).